Consider the following 801-residue polypeptide: Potassium transporter 1 (801 aa).

Residues 1–20 (MSSALEVEGSGSPGVEPAAT) are disordered. Topologically, residues 1 to 57 (MSSALEVEGSGSPGVEPAATATASRLKRHDSLFGDAEKVSGGKHHGGSAVSWAVTLH) are cytoplasmic. A helical transmembrane segment spans residues 58 to 80 (LAFQSVGIIYGDIGTSPLYVYSS). Residues 81 to 94 (TFPDGIGHRDDLVG) lie on the Extracellular side of the membrane. The chain crosses the membrane as a helical span at residues 95 to 115 (VLSLILYTLIIIPMLKYVFIV). The Cytoplasmic segment spans residues 116 to 181 (LYANDNGDGG…HKLESSRAAK (66 aa)). Residues 182-202 (MALFFLTILGTSMVMGDGTLT) traverse the membrane as a helical segment. Topologically, residues 203–219 (PAISVLSAVSGIREKAP) are extracellular. A helical transmembrane segment spans residues 220–240 (NLTQTQVVLISVAILFMLFSV). The Cytoplasmic segment spans residues 241 to 247 (QRFGTDK). Residues 248 to 268 (VGYTFAPIISVWFLLIAGIGL) traverse the membrane as a helical segment. Residues 269-298 (YNLVVHEITILKAFNPWYIVQYFRRNGKKG) lie on the Extracellular side of the membrane. The helical transmembrane segment at 299–319 (WVSLGGVVLCVTGTEGMFADL) threads the bilayer. Residues 320–328 (GHFNIRAVQ) are Cytoplasmic-facing. Residues 329 to 349 (ISFNCILFPSVALCYIGQAAY) form a helical membrane-spanning segment. At 350–375 (LRKFPENVSDTFYKSIPGKYRDRLNF) the chain is on the extracellular side. Residues 376–398 (GPLFWPTFIVAILAAIIASQAML) form a helical membrane-spanning segment. The Cytoplasmic segment spans residues 399-429 (SGAFAILSKALSLGCLPRVRVIHTSKKYEGQ). The chain crosses the membrane as a helical span at residues 430–450 (VYIPEVNFMMGLASIIVTIAF). Topologically, residues 451 to 461 (RTTTSIGNAYG) are extracellular. The helical transmembrane segment at 462-482 (ICVVTTFMVTTHLMTVVMLLI) threads the bilayer. Residues 483–487 (WKKHL) lie on the Cytoplasmic side of the membrane. The helical transmembrane segment at 488 to 508 (VFILLFYCVFGFTEVVYLSSI) threads the bilayer. Residues 509-511 (LSK) are Extracellular-facing. Residues 512-532 (FVDGGYLPFCFAMVLMTMMAT) form a helical membrane-spanning segment. At 533-801 (WHYVHVRRYW…LLKVGITYEI (269 aa)) the chain is on the cytoplasmic side. Residues 679–728 (DDDDEAAARPRRSTSSAVHSEEAIQAASSGRTTASSVQLQAGGEPPAAMD) are disordered. The segment covering 704-717 (AASSGRTTASSVQL) has biased composition (polar residues).

Belongs to the HAK/KUP transporter (TC 2.A.72.3) family. Expressed almost exclusively in roots.

It is found in the cell membrane. Its function is as follows. High-affinity potassium transporter. Also transports rubidium, with the same affinity and cesium, with a lower affinity. This is Potassium transporter 1 (HAK1) from Oryza sativa subsp. japonica (Rice).